An 86-amino-acid chain; its full sequence is Large ribosomal subunit protein uL23 (86 aa).

Belongs to the universal ribosomal protein uL23 family. Part of the 50S ribosomal subunit. Contacts protein L29.

Binds to 23S rRNA. One of the proteins that surrounds the polypeptide exit tunnel on the outside of the ribosome. The protein is Large ribosomal subunit protein uL23 of Thermococcus sibiricus (strain DSM 12597 / MM 739).